Here is a 228-residue protein sequence, read N- to C-terminus: Dehydrin Rab25 (228 aa).

2 disordered regions span residues 1 to 68 (MAEH…EAPH) and 115 to 228 (AGVT…HGHH). Composition is skewed to basic and acidic residues over residues 169-187 (KEKI…EQKQ) and 212-228 (KGIV…HGHH).

Belongs to the plant dehydrin family.

The polypeptide is Dehydrin Rab25 (RAB25) (Oryza sativa subsp. japonica (Rice)).